The sequence spans 502 residues: Cytochrome P450 71B10 (502 aa).

The helical transmembrane segment at 1–21 (MTVLWFVSLILLISILLVAVK) threads the bilayer. Cysteine 443 contributes to the heme binding site.

The protein belongs to the cytochrome P450 family. It depends on heme as a cofactor.

The protein resides in the membrane. This Arabidopsis thaliana (Mouse-ear cress) protein is Cytochrome P450 71B10 (CYP71B10).